Consider the following 723-residue polypeptide: LIM domain-binding protein 3 (723 aa).

The PDZ domain occupies 1-84; that stretch reads MSYSVTLTGP…NLSLTLQKSK (84 aa). Ser-44, Ser-98, and Asp-112 each carry phosphoserine. 2 disordered regions span residues 89 to 134 and 164 to 193; these read ISTT…GALE and SPVA…RQYN. Position 119 is a phosphothreonine (Thr-119). 2 positions are modified to phosphoserine: Ser-121 and Ser-123. Ser-214 carries the post-translational modification Phosphoserine. Arg-216 carries the post-translational modification Omega-N-methylarginine. Phosphoserine occurs at positions 220, 251, and 288. 2 disordered regions span residues 280–423 and 436–525; these read GTEY…YSPT and SPAP…PQVT. Ala-291 is modified (omega-N-methylarginine). Low complexity predominate over residues 309 to 376; it reads ATSPLLPASA…AAAASPAPSA (68 aa). Residue Ile-327 is modified to Phosphoserine. At Ser-330 the chain carries Omega-N-methylarginine. Pro residues predominate over residues 436–466; the sequence is SPAPTYTPSPAPTYSPSPAPAYTPSPAPNYT. The segment covering 490–509 has biased composition (polar residues); sequence DSFSQKFAPGKSTTTVSKQT. An omega-N-methylarginine mark is found at Arg-512 and Arg-529. LIM zinc-binding domains follow at residues 545–603, 604–663, and 664–723; these read PLCG…QFFA, PICA…LFST, and KCHG…AINV.

Interacts via its LIM domains with various PKC isoforms. Interacts via its PDZ domain with the ACTN2 C-terminal region. Interacts with MYOZ1, MYOZ2 and MYOZ3. Expressed primarily in adult heart and skeletal muscle, and detected at lower levels in lung. Isoforms are expressed in a tissue-specific manner. Isoform 1, isoform 3 and isoform 5 are expressed in heart, whereas isoform 2, isoform 4 and isoform 6 are expressed in skeletal muscle.

It localises to the cytoplasm. The protein localises to the perinuclear region. The protein resides in the cell projection. Its subcellular location is the pseudopodium. It is found in the cytoskeleton. It localises to the myofibril. The protein localises to the sarcomere. The protein resides in the z line. Its function is as follows. May function as an adapter in striated muscle to couple protein kinase C-mediated signaling via its LIM domains to the cytoskeleton. The sequence is that of LIM domain-binding protein 3 from Mus musculus (Mouse).